The primary structure comprises 107 residues: Anti-adapter protein IraM (107 aa).

This sequence belongs to the IraM/RssC family.

It is found in the cytoplasm. In terms of biological role, inhibits RpoS proteolysis by regulating RssB activity, thereby increasing the stability of the sigma stress factor RpoS during magnesium starvation. The protein is Anti-adapter protein IraM of Escherichia coli (strain 55989 / EAEC).